Reading from the N-terminus, the 167-residue chain is Phosphopantetheine adenylyltransferase (167 aa).

Serine 10 contributes to the substrate binding site. Residues serine 10–phenylalanine 11 and histidine 18 each bind ATP. Positions 42, 79, and 93 each coordinate substrate. ATP is bound by residues glycine 94–arginine 96, glutamate 104, and valine 129–threonine 135.

This sequence belongs to the bacterial CoaD family. As to quaternary structure, homohexamer. Mg(2+) serves as cofactor.

Its subcellular location is the cytoplasm. It carries out the reaction (R)-4'-phosphopantetheine + ATP + H(+) = 3'-dephospho-CoA + diphosphate. The protein operates within cofactor biosynthesis; coenzyme A biosynthesis; CoA from (R)-pantothenate: step 4/5. In terms of biological role, reversibly transfers an adenylyl group from ATP to 4'-phosphopantetheine, yielding dephospho-CoA (dPCoA) and pyrophosphate. In Methylocella silvestris (strain DSM 15510 / CIP 108128 / LMG 27833 / NCIMB 13906 / BL2), this protein is Phosphopantetheine adenylyltransferase.